Reading from the N-terminus, the 277-residue chain is tRNA uridine(34) hydroxylase (277 aa).

One can recognise a Rhodanese domain in the interval 126–221 (SSPDVHVIDT…YLETMRGDDS (96 aa)). The active-site Cysteine persulfide intermediate is Cys-181.

This sequence belongs to the TrhO family.

The catalysed reaction is uridine(34) in tRNA + AH2 + O2 = 5-hydroxyuridine(34) in tRNA + A + H2O. In terms of biological role, catalyzes oxygen-dependent 5-hydroxyuridine (ho5U) modification at position 34 in tRNAs. This chain is tRNA uridine(34) hydroxylase, found in Anaplasma marginale (strain St. Maries).